Reading from the N-terminus, the 363-residue chain is Chorismate synthase (363 aa).

NADP(+) is bound by residues arginine 48 and arginine 54. FMN-binding positions include 125 to 127 (RSS), 237 to 238 (NA), glycine 277, 292 to 296 (KPTSS), and arginine 318.

Belongs to the chorismate synthase family. In terms of assembly, homotetramer. Requires FMNH2 as cofactor.

The enzyme catalyses 5-O-(1-carboxyvinyl)-3-phosphoshikimate = chorismate + phosphate. The protein operates within metabolic intermediate biosynthesis; chorismate biosynthesis; chorismate from D-erythrose 4-phosphate and phosphoenolpyruvate: step 7/7. Catalyzes the anti-1,4-elimination of the C-3 phosphate and the C-6 proR hydrogen from 5-enolpyruvylshikimate-3-phosphate (EPSP) to yield chorismate, which is the branch point compound that serves as the starting substrate for the three terminal pathways of aromatic amino acid biosynthesis. This reaction introduces a second double bond into the aromatic ring system. The polypeptide is Chorismate synthase (Pseudomonas syringae pv. syringae (strain B728a)).